The sequence spans 429 residues: Ribosomal RNA small subunit methyltransferase B (429 aa).

S-adenosyl-L-methionine is bound by residues 254–260 (CAAPGGK), aspartate 277, aspartate 303, and aspartate 322. Cysteine 375 serves as the catalytic Nucleophile. The disordered stretch occupies residues 397–419 (ALSETGTPDQPGQQNLPGGEEGD). A compositionally biased stretch (polar residues) spans 400–412 (ETGTPDQPGQQNL).

The protein belongs to the class I-like SAM-binding methyltransferase superfamily. RsmB/NOP family.

Its subcellular location is the cytoplasm. The enzyme catalyses cytidine(967) in 16S rRNA + S-adenosyl-L-methionine = 5-methylcytidine(967) in 16S rRNA + S-adenosyl-L-homocysteine + H(+). Its function is as follows. Specifically methylates the cytosine at position 967 (m5C967) of 16S rRNA. The sequence is that of Ribosomal RNA small subunit methyltransferase B from Salmonella paratyphi A (strain ATCC 9150 / SARB42).